The chain runs to 378 residues: Putative F-box/kelch-repeat protein At3g43710 (378 aa).

In terms of domain architecture, F-box spans 23–69 (TFGIEMLPDDLVLSCLARVPRMYYPILSLVSKRFRSFLTSTELYQTR). Kelch repeat units lie at residues 130–176 (NIYV…VLDG), 178–227 (IYVA…GYDG), and 262–308 (SQCV…VPTK).

The protein is Putative F-box/kelch-repeat protein At3g43710 of Arabidopsis thaliana (Mouse-ear cress).